The primary structure comprises 180 residues: Translation initiation factor IF-3 (180 aa).

It belongs to the IF-3 family. Monomer.

The protein localises to the cytoplasm. Functionally, IF-3 binds to the 30S ribosomal subunit and shifts the equilibrium between 70S ribosomes and their 50S and 30S subunits in favor of the free subunits, thus enhancing the availability of 30S subunits on which protein synthesis initiation begins. This is Translation initiation factor IF-3 from Mesoplasma florum (strain ATCC 33453 / NBRC 100688 / NCTC 11704 / L1) (Acholeplasma florum).